A 73-amino-acid chain; its full sequence is Defensin-like protein 6 (73 aa).

Positions 1 to 26 (MENKFFAAFFLLLVLFSSQEIIGGEG) are cleaved as a signal peptide. Disulfide bonds link cysteine 29-cysteine 73, cysteine 40-cysteine 60, cysteine 46-cysteine 67, and cysteine 50-cysteine 69.

This sequence belongs to the DEFL family.

It is found in the secreted. Its function is as follows. Confers broad-spectrum resistance to pathogens. In Arabidopsis thaliana (Mouse-ear cress), this protein is Defensin-like protein 6 (PDF2.5).